Here is a 61-residue protein sequence, read N- to C-terminus: Photosystem II reaction center protein Z (61 aa).

2 helical membrane passes run Leu5–Ala25 and Thr38–Ala58.

It belongs to the PsbZ family. In terms of assembly, PSII is composed of 1 copy each of membrane proteins PsbA, PsbB, PsbC, PsbD, PsbE, PsbF, PsbH, PsbI, PsbJ, PsbK, PsbL, PsbM, PsbT, PsbX, PsbY, PsbZ, Psb30/Ycf12, at least 3 peripheral proteins of the oxygen-evolving complex and a large number of cofactors. It forms dimeric complexes.

The protein localises to the plastid. Its subcellular location is the chloroplast thylakoid membrane. In terms of biological role, may control the interaction of photosystem II (PSII) cores with the light-harvesting antenna, regulates electron flow through the 2 photosystem reaction centers. PSII is a light-driven water plastoquinone oxidoreductase, using light energy to abstract electrons from H(2)O, generating a proton gradient subsequently used for ATP formation. This is Photosystem II reaction center protein Z from Phaeodactylum tricornutum (strain CCAP 1055/1).